Consider the following 402-residue polypeptide: Multidrug resistance protein MdtH (402 aa).

The next 11 membrane-spanning stretches (helical) occupy residues Y13 to I33, A45 to F65, P99 to F116, L139 to L159, L165 to L185, V214 to M234, A244 to A264, L277 to L297, L300 to S322, L340 to G360, and L368 to F388.

Belongs to the major facilitator superfamily. DHA1 family. MdtH (TC 2.A.1.2.21) subfamily.

It is found in the cell inner membrane. The sequence is that of Multidrug resistance protein MdtH from Citrobacter koseri (strain ATCC BAA-895 / CDC 4225-83 / SGSC4696).